Consider the following 317-residue polypeptide: MGGVIKSIFTFVLIVEFIIGNLGNSFIALVNCIDWVKGRKISSVDRILTALAISKISLVWLIFGSWCVSVFFPALFATEKMFRMLTNIWTVINHFSVWLATGLGTFYFLKIANFSNSIFLYLKWRVKKVVLVLLLVTSVFLFLNIALINIHINASINGYRRNKTCSSDSSNFTRFSSLIVLTSTVFIFIPFTLSLAMFLLLIFSXWKHRKKMQHTVKRSGDASTKAHRGVKSVXTFFLLYAIFCLSFFISVWTSERLEENLIILSQVMGMAYPSCHSCVLILGNKKLRQASLSVLLWLRYMFKDGEPSGHKEFRESS.

At 1–7 the chain is on the extracellular side; it reads MGGVIKS. Residues 8–28 form a helical membrane-spanning segment; that stretch reads IFTFVLIVEFIIGNLGNSFIA. The Cytoplasmic segment spans residues 29–55; the sequence is LVNCIDWVKGRKISSVDRILTALAISK. Residues 56 to 76 traverse the membrane as a helical segment; that stretch reads ISLVWLIFGSWCVSVFFPALF. Residues 77 to 87 are Extracellular-facing; sequence ATEKMFRMLTN. Residues T86 and W89 each coordinate cholesterol. A helical transmembrane segment spans residues 88-108; sequence IWTVINHFSVWLATGLGTFYF. The Cytoplasmic portion of the chain corresponds to 109 to 129; sequence LKIANFSNSIFLYLKWRVKKV. The helical transmembrane segment at 130 to 150 threads the bilayer; the sequence is VLVLLLVTSVFLFLNIALINI. At 151–184 the chain is on the extracellular side; the sequence is HINASINGYRRNKTCSSDSSNFTRFSSLIVLTST. N153, N162, and N171 each carry an N-linked (GlcNAc...) asparagine glycan. V180 lines the cholesterol pocket. A helical transmembrane segment spans residues 185 to 205; the sequence is VFIFIPFTLSLAMFLLLIFSX. Topologically, residues 206-232 are cytoplasmic; the sequence is WKHRKKMQHTVKRSGDASTKAHRGVKS. The helical transmembrane segment at 233–253 threads the bilayer; it reads VXTFFLLYAIFCLSFFISVWT. Over 254–261 the chain is Extracellular; sequence SERLEENL. The chain crosses the membrane as a helical span at residues 262–282; the sequence is IILSQVMGMAYPSCHSCVLIL. The cholesterol site is built by S265 and M268. Residues 283 to 317 lie on the Cytoplasmic side of the membrane; sequence GNKKLRQASLSVLLWLRYMFKDGEPSGHKEFRESS.

It belongs to the G-protein coupled receptor T2R family. As to quaternary structure, core component of the TAS2R14-GNAI1 complex, consisting of TAS2R14, GNAI1, GNB1 and GNG2; within the complex interacts with GNAI1. Core component of the TAS2R14-GNAT3 complex, consisting of TAS2R14, GNAT3, GNB1 and GNG2; within the complex interacts with GNAT3. Core component of the TAS2R14-GNAS2 complex, consisting of TAS2R14, GNAS2, GNB1 and GNG2; within the complex interacts with GNAS2.

It localises to the membrane. It catalyses the reaction Ca(2+)(in) = Ca(2+)(out). The catalysed reaction is 3',5'-cyclic AMP(in) = 3',5'-cyclic AMP(out). Basal activity is enhanced by binding to bitter tastants, such as flufenamic acid and aristolochic acid. Regulated by cholesterol in a concentration-dependent manner. Gustducin-linked G-protein coupled receptor that plays a role in the perception of bitterness. The activity of this receptor stimulates GNAT3, activating the gustducin G-protein pathway. Likely plays a role in sensing the chemical composition of the gastrointestinal content and other extra-oral tissues via the inhibitory G-protein pathways. This is Taste receptor type 2 member 14 (TAS2R14) from Pan troglodytes (Chimpanzee).